A 347-amino-acid chain; its full sequence is NADH-ubiquinone oxidoreductase chain 2 (347 aa).

The next 10 membrane-spanning stretches (helical) occupy residues 13–33 (IFAGTLITALSSHWFFAWVGL), 55–75 (AAIKYFLTQATASMILLMAIL), 96–116 (LMIVVAMAMKLGMAPFHFWVP), 123–143 (PLMSGLLLLTWQKLAPMSIMY), 150–170 (NVSLLLTLSILSILAGSWGGL), 178–198 (ILAYSSITHVGWMMAVLPYNP), 201–221 (TILNLTIYIILTTTTFLLLNL), 247–267 (TLLSLGGLPPLTGFLPKWLII), 277–297 (ITPTIMAIITLLNLYFYLRLI), and 325–345 (FLPTLITLTTLLLPISPFMLM).

The protein belongs to the complex I subunit 2 family. As to quaternary structure, core subunit of respiratory chain NADH dehydrogenase (Complex I) which is composed of 45 different subunits. Interacts with TMEM242.

Its subcellular location is the mitochondrion inner membrane. The enzyme catalyses a ubiquinone + NADH + 5 H(+)(in) = a ubiquinol + NAD(+) + 4 H(+)(out). Core subunit of the mitochondrial membrane respiratory chain NADH dehydrogenase (Complex I) which catalyzes electron transfer from NADH through the respiratory chain, using ubiquinone as an electron acceptor. Essential for the catalytic activity and assembly of complex I. The sequence is that of NADH-ubiquinone oxidoreductase chain 2 from Gorilla gorilla gorilla (Western lowland gorilla).